Reading from the N-terminus, the 248-residue chain is 3-deoxy-manno-octulosonate cytidylyltransferase (248 aa).

The protein belongs to the KdsB family.

It is found in the cytoplasm. The enzyme catalyses 3-deoxy-alpha-D-manno-oct-2-ulosonate + CTP = CMP-3-deoxy-beta-D-manno-octulosonate + diphosphate. It functions in the pathway nucleotide-sugar biosynthesis; CMP-3-deoxy-D-manno-octulosonate biosynthesis; CMP-3-deoxy-D-manno-octulosonate from 3-deoxy-D-manno-octulosonate and CTP: step 1/1. The protein operates within bacterial outer membrane biogenesis; lipopolysaccharide biosynthesis. Its function is as follows. Activates KDO (a required 8-carbon sugar) for incorporation into bacterial lipopolysaccharide in Gram-negative bacteria. In Escherichia coli O139:H28 (strain E24377A / ETEC), this protein is 3-deoxy-manno-octulosonate cytidylyltransferase.